Here is a 360-residue protein sequence, read N- to C-terminus: MLVWLAEYLTQYYTGFNVFSYLTLRAILGILTALMMSLYLGPKLIRALQRMQIGQTVRDDGPQSHLSKSGTPTMGGLLILAAIFTSTLLWADLSNKYVWATLFVIGSLGVVGFVDDYRKVIRKDPKGLIAKWKYFWQSVIALVVACALFFTSTQANETSLVVPFFKDVLPQLGLFYIVITYFALVGTSNAVNLTDGLDGLAIVPTILVAAALAIIAYLTGNVNFSNYLHIPYLPLASELVVVCTAIVGAGLGFLWFNTYPAQVFMGDVGSLALGGALGIIAVLVRQELLLIIMGGVFVMEALSVILQVGSYKLRGQRIFRMAPIHHHYELKGWPEPRVIVRFWIISIVLVLAGLATLKIR.

A run of 10 helical transmembrane segments spans residues 18-38, 73-93, 97-117, 135-155, 168-188, 199-219, 236-256, 263-283, 288-308, and 339-359; these read VFSYLTLRAILGILTALMMSL, TMGGLLILAAIFTSTLLWADL, YVWATLFVIGSLGVVGFVDDY, FWQSVIALVVACALFFTSTQA, VLPQLGLFYIVITYFALVGTS, GLAIVPTILVAAALAIIAYLT, ASELVVVCTAIVGAGLGFLWF, VFMGDVGSLALGGALGIIAVL, LLLIIMGGVFVMEALSVILQV, and IVRFWIISIVLVLAGLATLKI.

The protein belongs to the glycosyltransferase 4 family. MraY subfamily. The cofactor is Mg(2+).

It is found in the cell inner membrane. The enzyme catalyses UDP-N-acetyl-alpha-D-muramoyl-L-alanyl-gamma-D-glutamyl-meso-2,6-diaminopimeloyl-D-alanyl-D-alanine + di-trans,octa-cis-undecaprenyl phosphate = di-trans,octa-cis-undecaprenyl diphospho-N-acetyl-alpha-D-muramoyl-L-alanyl-D-glutamyl-meso-2,6-diaminopimeloyl-D-alanyl-D-alanine + UMP. It participates in cell wall biogenesis; peptidoglycan biosynthesis. Catalyzes the initial step of the lipid cycle reactions in the biosynthesis of the cell wall peptidoglycan: transfers peptidoglycan precursor phospho-MurNAc-pentapeptide from UDP-MurNAc-pentapeptide onto the lipid carrier undecaprenyl phosphate, yielding undecaprenyl-pyrophosphoryl-MurNAc-pentapeptide, known as lipid I. The protein is Phospho-N-acetylmuramoyl-pentapeptide-transferase of Pseudoalteromonas translucida (strain TAC 125).